The primary structure comprises 352 residues: Photosystem II D2 protein (352 aa).

Residues 40–60 (CAYLALGGWLTGTSFVTSWYT) traverse the membrane as a helical segment. His117 contacts chlorophyll a. The helical transmembrane segment at 124 to 140 (GFMLRQFEIARLVGVRP) threads the bilayer. Pheophytin a-binding residues include Gln129 and Asn142. The helical transmembrane segment at 152 to 165 (VFVSVFLMYPLGQS) threads the bilayer. His197 serves as a coordination point for chlorophyll a. A helical membrane pass occupies residues 207 to 227 (GALLCAIHGATVENTLFEDSE). Positions 214 and 261 each coordinate a plastoquinone. Residue His214 participates in Fe cation binding. His268 is a Fe cation binding site. Residues 278-294 (GLWMSSIGIVGLALNLR) traverse the membrane as a helical segment.

It belongs to the reaction center PufL/M/PsbA/D family. In terms of assembly, PSII is composed of 1 copy each of membrane proteins PsbA, PsbB, PsbC, PsbD, PsbE, PsbF, PsbH, PsbI, PsbJ, PsbK, PsbL, PsbM, PsbT, PsbX, PsbY, PsbZ, Psb30/Ycf12, peripheral proteins PsbO, CyanoQ (PsbQ), PsbU, PsbV and a large number of cofactors. It forms dimeric complexes. Requires The D1/D2 heterodimer binds P680, chlorophylls that are the primary electron donor of PSII, and subsequent electron acceptors. It shares a non-heme iron and each subunit binds pheophytin, quinone, additional chlorophylls, carotenoids and lipids. There is also a Cl(-1) ion associated with D1 and D2, which is required for oxygen evolution. The PSII complex binds additional chlorophylls, carotenoids and specific lipids. as cofactor.

The protein resides in the cellular thylakoid membrane. The catalysed reaction is 2 a plastoquinone + 4 hnu + 2 H2O = 2 a plastoquinol + O2. Its function is as follows. Photosystem II (PSII) is a light-driven water:plastoquinone oxidoreductase that uses light energy to abstract electrons from H(2)O, generating O(2) and a proton gradient subsequently used for ATP formation. It consists of a core antenna complex that captures photons, and an electron transfer chain that converts photonic excitation into a charge separation. The D1/D2 (PsbA/PsbD) reaction center heterodimer binds P680, the primary electron donor of PSII as well as several subsequent electron acceptors. D2 is needed for assembly of a stable PSII complex. The chain is Photosystem II D2 protein from Synechococcus elongatus (strain ATCC 33912 / PCC 7942 / FACHB-805) (Anacystis nidulans R2).